The sequence spans 394 residues: MSKEKFERTKPHVNVGTIGHVDHGKTTLTAAITTVLAKHFGGAARAFDQIDNAPEEKARGITINTSHVEYDTETRHYAHVDCPGHADYVKNMITGAAQMDGAILVVAATDGPMPQTREHILLGRQVGVPYIIVFLNKCDMVDDEELLELVEMEVRELLSQYDFPGDDTPIVRGSALQALNGVPEWEEKIIELAQHLDSYIPEPERAIDKPFLLPIEDVFSISGRGTVVTGRVERGIIKSGEEVEIVGIKETTKTTVTGVEMFRKLLDEGRAGENVGALLRGTKREEIERGQVLAKPGTITPHTDFESEVYVLSKEEGGRHTPFFKGYRPQFYFRTTDVTGTIELPEGVEMVMPGDNIKMTVSLIHPIAMDEGLRFAIREGGRTVGAGVVAKIIK.

The tr-type G domain occupies 10 to 204; the sequence is KPHVNVGTIG…HLDSYIPEPE (195 aa). The segment at 19–26 is G1; the sequence is GHVDHGKT. 19–26 lines the GTP pocket; the sequence is GHVDHGKT. Position 26 (T26) interacts with Mg(2+). The interval 60–64 is G2; sequence GITIN. The segment at 81–84 is G3; the sequence is DCPG. Residues 81 to 85 and 136 to 139 each bind GTP; these read DCPGH and NKCD. A G4 region spans residues 136-139; that stretch reads NKCD. Residues 174-176 are G5; it reads SAL.

It belongs to the TRAFAC class translation factor GTPase superfamily. Classic translation factor GTPase family. EF-Tu/EF-1A subfamily. As to quaternary structure, monomer.

The protein localises to the cytoplasm. It carries out the reaction GTP + H2O = GDP + phosphate + H(+). Its function is as follows. GTP hydrolase that promotes the GTP-dependent binding of aminoacyl-tRNA to the A-site of ribosomes during protein biosynthesis. This chain is Elongation factor Tu, found in Haemophilus ducreyi (strain 35000HP / ATCC 700724).